Here is a 521-residue protein sequence, read N- to C-terminus: Cytochrome P450 1A1 (521 aa).

Position 229 (Phe229) interacts with substrate. Cys463 is a heme binding site.

This sequence belongs to the cytochrome P450 family. Requires heme as cofactor.

The protein resides in the endoplasmic reticulum membrane. It is found in the microsome membrane. The catalysed reaction is an organic molecule + reduced [NADPH--hemoprotein reductase] + O2 = an alcohol + oxidized [NADPH--hemoprotein reductase] + H2O + H(+). Functionally, cytochromes P450 are a group of heme-thiolate monooxygenases. They oxidize a variety of structurally unrelated compounds, including steroids, fatty acids, and xenobiotics. This is Cytochrome P450 1A1 (cyp1a1) from Opsanus tau (Oyster toadfish).